Reading from the N-terminus, the 444-residue chain is Phosphoglucosamine mutase (444 aa).

Residue serine 103 is the Phosphoserine intermediate of the active site. Mg(2+) is bound by residues serine 103, aspartate 242, aspartate 244, and aspartate 246. Phosphoserine is present on serine 103.

This sequence belongs to the phosphohexose mutase family. Mg(2+) is required as a cofactor. In terms of processing, activated by phosphorylation.

The enzyme catalyses alpha-D-glucosamine 1-phosphate = D-glucosamine 6-phosphate. Functionally, catalyzes the conversion of glucosamine-6-phosphate to glucosamine-1-phosphate. The protein is Phosphoglucosamine mutase of Hydrogenovibrio crunogenus (strain DSM 25203 / XCL-2) (Thiomicrospira crunogena).